The chain runs to 248 residues: Killer cell lectin-like receptor subfamily I member 1 (248 aa).

Topologically, residues 1–80 (MLHSKRREYT…RQGPKSTVWR (80 aa)) are cytoplasmic. Short sequence motifs (ITIM motif) lie at residues 16-21 (VTYTEL) and 47-52 (LKYGEL). The chain crosses the membrane as a helical; Signal-anchor for type II membrane protein span at residues 81-101 (VVTGMLGALCVVLMTTTGILL). Over 102-248 (PKLFSSQEEQ…KKSYICEFNI (147 aa)) the chain is Extracellular. Intrachain disulfides connect Cys132/Cys145, Cys161/Cys244, and Cys223/Cys236. One can recognise a C-type lectin domain in the interval 139–245 (FGNNFYCVFK…CSAKKSYICE (107 aa)). N-linked (GlcNAc...) asparagine glycosylation is found at Asn197, Asn214, and Asn220.

Heterodimer with KLRE1. Interacts with PTPN6. In terms of tissue distribution, expressed in natural killer (NK) cells.

The protein localises to the cell membrane. Functionally, lectin-like receptor for natural killer (NK) cells. Heterodimer formation with KLRE1 mediates inhibition of NK cell cytolytic activity. In Mus musculus (Mouse), this protein is Killer cell lectin-like receptor subfamily I member 1.